The following is a 97-amino-acid chain: UPF0250 protein HD_2015 (97 aa).

It belongs to the UPF0250 family.

This Haemophilus ducreyi (strain 35000HP / ATCC 700724) protein is UPF0250 protein HD_2015.